Here is a 551-residue protein sequence, read N- to C-terminus: Adenine deaminase (551 aa).

This sequence belongs to the metallo-dependent hydrolases superfamily. Adenine deaminase family. The cofactor is Mn(2+).

It catalyses the reaction adenine + H2O + H(+) = hypoxanthine + NH4(+). The polypeptide is Adenine deaminase (Leuconostoc mesenteroides subsp. mesenteroides (strain ATCC 8293 / DSM 20343 / BCRC 11652 / CCM 1803 / JCM 6124 / NCDO 523 / NBRC 100496 / NCIMB 8023 / NCTC 12954 / NRRL B-1118 / 37Y)).